Reading from the N-terminus, the 217-residue chain is Small ribosomal subunit protein uS3 (217 aa).

A KH type-2 domain is found at isoleucine 38 to arginine 106.

Belongs to the universal ribosomal protein uS3 family. In terms of assembly, part of the 30S ribosomal subunit. Forms a tight complex with proteins S10 and S14.

Its function is as follows. Binds the lower part of the 30S subunit head. Binds mRNA in the 70S ribosome, positioning it for translation. The protein is Small ribosomal subunit protein uS3 of Desulfotalea psychrophila (strain LSv54 / DSM 12343).